The sequence spans 88 residues: Small ribosomal subunit protein uS15c (88 aa).

The protein belongs to the universal ribosomal protein uS15 family. Part of the 30S ribosomal subunit.

Its subcellular location is the plastid. It localises to the chloroplast. In Cycas taitungensis (Prince sago), this protein is Small ribosomal subunit protein uS15c (rps15).